The following is a 518-amino-acid chain: Membrane-bound lytic murein transglycosylase F (518 aa).

Positions 1 to 21 (MKKLKINYLFIGILALLLAVA) are cleaved as a signal peptide. Residues 22 to 269 (LWPSIPWFGK…RIEEKYLGHG (248 aa)) form a non-LT domain region. The interval 270 to 518 (DDFDYVDTRT…SRKGSEEKQN (249 aa)) is LT domain. Glutamate 314 is a catalytic residue.

The protein in the N-terminal section; belongs to the bacterial solute-binding protein 3 family. This sequence in the C-terminal section; belongs to the transglycosylase Slt family.

The protein localises to the cell outer membrane. It carries out the reaction Exolytic cleavage of the (1-&gt;4)-beta-glycosidic linkage between N-acetylmuramic acid (MurNAc) and N-acetylglucosamine (GlcNAc) residues in peptidoglycan, from either the reducing or the non-reducing ends of the peptidoglycan chains, with concomitant formation of a 1,6-anhydrobond in the MurNAc residue.. Murein-degrading enzyme that degrades murein glycan strands and insoluble, high-molecular weight murein sacculi, with the concomitant formation of a 1,6-anhydromuramoyl product. Lytic transglycosylases (LTs) play an integral role in the metabolism of the peptidoglycan (PG) sacculus. Their lytic action creates space within the PG sacculus to allow for its expansion as well as for the insertion of various structures such as secretion systems and flagella. This Shigella boydii serotype 18 (strain CDC 3083-94 / BS512) protein is Membrane-bound lytic murein transglycosylase F.